Here is a 427-residue protein sequence, read N- to C-terminus: Enolase (427 aa).

Residue glutamine 163 coordinates (2R)-2-phosphoglycerate. Catalysis depends on glutamate 205, which acts as the Proton donor. Aspartate 242, glutamate 285, and aspartate 312 together coordinate Mg(2+). The (2R)-2-phosphoglycerate site is built by lysine 337, arginine 366, serine 367, and lysine 388. Lysine 337 serves as the catalytic Proton acceptor.

This sequence belongs to the enolase family. The cofactor is Mg(2+).

The protein resides in the cytoplasm. It localises to the secreted. It is found in the cell surface. It carries out the reaction (2R)-2-phosphoglycerate = phosphoenolpyruvate + H2O. It functions in the pathway carbohydrate degradation; glycolysis; pyruvate from D-glyceraldehyde 3-phosphate: step 4/5. Its function is as follows. Catalyzes the reversible conversion of 2-phosphoglycerate (2-PG) into phosphoenolpyruvate (PEP). It is essential for the degradation of carbohydrates via glycolysis. The polypeptide is Enolase (Janthinobacterium sp. (strain Marseille) (Minibacterium massiliensis)).